We begin with the raw amino-acid sequence, 465 residues long: Cysteine--tRNA ligase (465 aa).

Residue cysteine 27 coordinates Zn(2+). A 'HIGH' region motif is present at residues 29 to 39 (PTVYNFFHIGN). 3 residues coordinate Zn(2+): cysteine 207, histidine 232, and glutamate 236. The 'KMSKS' region signature appears at 264 to 268 (KMSKS). Lysine 267 is a binding site for ATP.

The protein belongs to the class-I aminoacyl-tRNA synthetase family. Monomer. Requires Zn(2+) as cofactor.

The protein localises to the cytoplasm. It carries out the reaction tRNA(Cys) + L-cysteine + ATP = L-cysteinyl-tRNA(Cys) + AMP + diphosphate. In Clostridium botulinum (strain Kyoto / Type A2), this protein is Cysteine--tRNA ligase.